The chain runs to 373 residues: Cobalt-precorrin-5B C(1)-methyltransferase (373 aa).

This sequence belongs to the CbiD family.

It carries out the reaction Co-precorrin-5B + S-adenosyl-L-methionine = Co-precorrin-6A + S-adenosyl-L-homocysteine. It participates in cofactor biosynthesis; adenosylcobalamin biosynthesis; cob(II)yrinate a,c-diamide from sirohydrochlorin (anaerobic route): step 6/10. In terms of biological role, catalyzes the methylation of C-1 in cobalt-precorrin-5B to form cobalt-precorrin-6A. This Polaromonas sp. (strain JS666 / ATCC BAA-500) protein is Cobalt-precorrin-5B C(1)-methyltransferase.